Consider the following 405-residue polypeptide: Divinyl chlorophyllide a 8-vinyl-reductase, chloroplastic (405 aa).

The N-terminal 58 residues, 1–58 (MAALLLSSHLTAASSSSTTSPTARPAPSFVSFRAANAAPKGARRGWPFLASSVEPPPA), are a transit peptide targeting the chloroplast.

The protein localises to the plastid. The protein resides in the chloroplast. The catalysed reaction is protochlorophyllide a + NADP(+) = 3,8-divinyl protochlorophyllide a + NADPH + H(+). The protein operates within porphyrin-containing compound metabolism; chlorophyll biosynthesis. In terms of biological role, catalyzes the conversion of divinyl chlorophyllide to monovinyl chlorophyllide. Reduces the 8-vinyl group of the tetrapyrrole to an ethyl group using NADPH as the reductant. Can use (3,8-divinyl)-chlorophyllide a (DV-Chlidea) &gt; (3,8-divinyl)-chlorophyll a (DV-Chla) &gt; (3,8-divinyl)-protochlorophyllide a (DV-Pchlidea) &gt; (3,8-divinyl)-magnesium-protoporphyrin IX monomethyl ester (DV-MPE) &gt; (3,8-divinyl)-magnesium-protoporphyrin IX (DV-Mg-Proto) as substrates. In Oryza sativa subsp. indica (Rice), this protein is Divinyl chlorophyllide a 8-vinyl-reductase, chloroplastic (DVR).